The following is a 190-amino-acid chain: Ribosome maturation factor RimM (190 aa).

One can recognise a PRC barrel domain in the interval Glu-95 to Leu-177. The interval Leu-170–Glu-190 is disordered. A compositionally biased stretch (pro residues) spans Pro-181 to Glu-190.

Belongs to the RimM family. As to quaternary structure, binds ribosomal protein uS19.

Its subcellular location is the cytoplasm. In terms of biological role, an accessory protein needed during the final step in the assembly of 30S ribosomal subunit, possibly for assembly of the head region. Essential for efficient processing of 16S rRNA. May be needed both before and after RbfA during the maturation of 16S rRNA. It has affinity for free ribosomal 30S subunits but not for 70S ribosomes. In Rhizobium rhizogenes (strain K84 / ATCC BAA-868) (Agrobacterium radiobacter), this protein is Ribosome maturation factor RimM.